A 364-amino-acid polypeptide reads, in one-letter code: Pectinesterase (364 aa).

The N-terminal stretch at 1–22 (MSCIAVEAVLLGILLYIPIVLS) is a signal peptide. N-linked (GlcNAc...) asparagine glycosylation occurs at Asn103. The active site involves Asp220.

It localises to the secreted. It carries out the reaction [(1-&gt;4)-alpha-D-galacturonosyl methyl ester](n) + n H2O = [(1-&gt;4)-alpha-D-galacturonosyl](n) + n methanol + n H(+). It functions in the pathway glycan metabolism; pectin degradation; 2-dehydro-3-deoxy-D-gluconate from pectin: step 1/5. Functionally, catalyzes the demethylesterification of homogalacturonan components of pectin. This is Pectinesterase from Parthenium hysterophorus (Santa Maria feverfew).